Reading from the N-terminus, the 91-residue chain is Sec-independent protein translocase protein TatA (91 aa).

Residues 2–22 (ANLGFPELVLIAVVILVLFGW) traverse the membrane as a helical segment. Over residues 43–55 (VSEMKNDGAEAEK) the composition is skewed to basic and acidic residues. The tract at residues 43-91 (VSEMKNDGAEAEKTSAASTKTDEITSVSSTDTPQPTVTVESKDEKKHPA) is disordered. A compositionally biased stretch (polar residues) spans 57 to 81 (SAASTKTDEITSVSSTDTPQPTVTV). Basic and acidic residues predominate over residues 82-91 (ESKDEKKHPA).

Belongs to the TatA/E family. As to quaternary structure, the Tat system comprises two distinct complexes: a TatABC complex, containing multiple copies of TatA, TatB and TatC subunits, and a separate TatA complex, containing only TatA subunits. Substrates initially bind to the TatABC complex, which probably triggers association of the separate TatA complex to form the active translocon.

It localises to the cell membrane. Its function is as follows. Part of the twin-arginine translocation (Tat) system that transports large folded proteins containing a characteristic twin-arginine motif in their signal peptide across membranes. TatA could form the protein-conducting channel of the Tat system. In Corynebacterium kroppenstedtii (strain DSM 44385 / JCM 11950 / CIP 105744 / CCUG 35717), this protein is Sec-independent protein translocase protein TatA.